A 1475-amino-acid chain; its full sequence is Peroxidasin homolog (1475 aa).

Positions 1–23 (MAVRPTRRCLLALLLCFAWWAMA) are cleaved as a signal peptide. An LRRNT domain is found at 24-60 (VVASKQGAGCPSRCLCFRTTVRCMHLLLEAVPAVAPQ). Intrachain disulfides connect Cys33–Cys39 and Cys37–Cys46. LRR repeat units lie at residues 58–81 (APQTSILDLRFNRIREIQPGAFRR), 82–105 (LRSLNTLLLNNNQIKKIPNGAFED), 107–129 (ENLKYLYLYKNEIQSIDRQAFKG), 130–153 (LASLEQLYLHFNQIETLDPESFQH), 154–177 (LPKLERLFLHNNRITHLVPGTFSQ), and 179–201 (ESMKRLRLDSNALHCDCEILWLA). Residues 189–241 (NALHCDCEILWLADLLKTYAQSGNAQAAATCEYPRRIQGRSVATITPEELNCE) enclose the LRRCT domain. Disulfide bonds link Cys193-Cys240, Cys195-Cys219, Cys264-Cys314, Cys360-Cys409, Cys451-Cys499, and Cys543-Cys591. Ig-like C2-type domains lie at 243–329 (PRIT…QEVT), 339–425 (PTFV…AFII), 430–517 (PQFT…LTVQ), and 518–607 (PRVT…MVLS). Asn387 carries N-linked (GlcNAc...) asparagine glycosylation. The stretch at 402–425 (SDSGEYTCFASNSVDSIHATAFII) is one LRR 7 repeat. Residues Asn637, Asn696, Asn716, and Asn728 are each glycosylated (N-linked (GlcNAc...) asparagine). Disulfide bonds link Cys720-Cys882, Cys729-Cys745, Cys844-Cys854, and Cys848-Cys872. Asp823 provides a ligand contact to heme b. The Proton acceptor role is filled by His824. A Ca(2+)-binding site is contributed by Asp825. Thr904, Tyr906, Asp908, and Ser910 together coordinate Ca(2+). An intrachain disulfide couples Cys956 to Cys967. Asn961 is a glycosylation site (N-linked (GlcNAc...) asparagine). Heme b is bound by residues Glu977 and His1071. One copy of the LRR 8 repeat lies at 1148-1172 (ALDLAAINIQRGRDHGIPPYHDYRV). Tyr1173 bears the Phosphotyrosine mark. Disulfide bonds link Cys1174–Cys1231 and Cys1272–Cys1298. An N-linked (GlcNAc...) asparagine glycan is attached at Asn1175. Ser1177 carries the post-translational modification Phosphoserine. The stretch at 1267 to 1288 (LARILCDNSDNITRVQQDVFRV) is one LRR 9 repeat. Asn1277 and Asn1364 each carry an N-linked (GlcNAc...) asparagine glycan. A required in homotrimerization region spans residues 1312–1407 (CCEDCRTRGQ…QINSLESRLS (96 aa)). The VWFC domain occupies 1409-1467 (TECVDDSGESHGGNTKWKKDPCTVCECKNGQITCFVEACQPAACPQPVKVEGACCPVCL).

It belongs to the peroxidase family. XPO subfamily. In terms of assembly, homotrimer; disulfide-linked. The homotrimer form is predominant. Homooligomer; disulfide-linked. Oligomerization occurs intracellularly before C-terminal proteolytic cleavage. Interacts with PXDNL; this interaction inhibits the peroxidase activity of PXDN. Ca(2+) is required as a cofactor. Requires heme b as cofactor. Processed by FURIN and the proteolytic processing largely depends on the peroxidase activity of PXDN. The proteolytic cleavage occurs after intracellular homotrimerization and releases into the extracellular matrix a large, catalytically active fragment and a smaller fragment consisting primarily of the C-terminal VWFC domain. The processing enhances both peroxidase activity and sulfilimine cross-links formation. As to expression, highly expressed in the cardiovascular system. In the embryo, expressed in the corneal epithelial layer. In the adult eyes, expressed in the corneal and lens epithelium. Expressed in lung.

The protein resides in the secreted. The protein localises to the extracellular space. It localises to the extracellular matrix. It is found in the endoplasmic reticulum. Its subcellular location is the cell surface. The protein resides in the basement membrane. It catalyses the reaction L-lysyl-[collagen] + L-methionyl-[collagen] + H2O2 = [collagen]-L-lysyl-N-S-L-methionyl-[collagen] + 2 H2O + H(+). The enzyme catalyses bromide + H2O2 = hypobromite + H2O. It carries out the reaction L-lysyl-[collagen] + L-methionyl-[collagen] + hypobromite = [collagen]-L-lysyl-N-S-L-methionyl-[collagen] + bromide + H2O + H(+). The catalysed reaction is (5R)-5-hydroxy-L-lysyl-[collagen] + L-methionyl-[collagen] + hypobromite = [collagen]-(5R)-5-hydroxy-L-lysyl-N-S-L-methionyl-[collagen] + bromide + H2O + H(+). It catalyses the reaction (5R)-5-hydroxy-L-lysyl-[collagen] + L-methionyl-[collagen] + H2O2 = [collagen]-(5R)-5-hydroxy-L-lysyl-N-S-L-methionyl-[collagen] + 2 H2O + H(+). The enzyme catalyses L-tyrosyl-[protein] + bromide + H2O2 + H(+) = 3-bromo-L-tyrosyl-[protein] + 2 H2O. It carries out the reaction hypobromite + L-tyrosyl-[protein] + H(+) = 3-bromo-L-tyrosyl-[protein] + H2O. With respect to regulation, thiocyanate inhibits the formation of 3-bromotyrosine. Catalyzes the two-electron oxidation of bromide by hydrogen peroxide and generates hypobromite as a reactive intermediate which mediates the formation of sulfilimine cross-links between methionine and hydroxylysine residues within an uncross-linked collagen IV/COL4A1 NC1 hexamer. In turns, directly contributes to the collagen IV network-dependent fibronectin/FN and laminin assembly, which is required for full extracellular matrix (ECM)-mediated signaling. Thus, sulfilimine cross-links are essential for growth factor-induced cell proliferation and survival in endothelial cells, an event essential to basement membrane integrity. In addition, through the bromide oxidation, may promote tubulogenesis and induce angiogenesis through ERK1/2, Akt, and FAK pathways. Moreover brominates alpha2 collagen IV chain/COL4A2 at 'Tyr-1480' and leads to bromine enrichment of the basement membranes. In vitro, can also catalyze the two-electron oxidation of thiocyanate and iodide and these two substrates could effectively compete with bromide and thus inhibit the formation of sulfilimine bonds. Binds laminins. May play a role in the organization of eyeball structure and lens development during eye development. The protein is Peroxidasin homolog of Mus musculus (Mouse).